The following is a 330-amino-acid chain: HTH-type transcriptional regulator GanR (330 aa).

Residues 2–57 (ATIKDIAQEAGFSISTVSRVLNNDESLSVPDETREKIYEAAEKLNYRKKTVRPLVK) form the HTH lacI-type domain. A DNA-binding region (H-T-H motif) is located at residues 4–23 (IKDIAQEAGFSISTVSRVLN).

In terms of biological role, negatively regulates the expression of the ganSPQAB operon. Inhibits transcription of the operon by binding to an operator in the promoter region. In the presence of galactobiose, GanR dissociates from the promoter, resulting in the expression of the gan operon. This is HTH-type transcriptional regulator GanR from Bacillus subtilis (strain 168).